The primary structure comprises 675 residues: MVAREGGPAPADAAQRIAELREQIRRHDYCYYVLDAPEISDAEYDRLMRELLDLEQSHPELVTADSPSQRVGGQPLAAFRAVSHRVPLLSLANAVDDQDLREFDRRARERADRPLTYVVEPKIDGLTVVLSYEEGRFIRAATRGDGLIGEDITENIKTVRAVPLRLKRDIKSLEVRGEAYLPKAAFARLNEEREEAGEAAFANPRNAAAGSLRQLDPKVTASRPLRAYFYNILHLEGADGVGEQVEALQMLEDLGLPVNPERRYCRTIDDVIDYCRYWTEHRHDLPYEIDGMVVKVNELDQYPLLGETAKSPRYAIAFKFPPEQAITRVRDITVKVGRTGVITPTAELEPVRLAGTTVSRATLHNEDIIRERDIHIGDYVVIQKAGDIIPEVLSVLKEKRTGEERPFFMPQTCPECHSPVSRLKGEAAIRCTSLACPAQAKEGLIHFASRDAMNIEGLGPAVVNLLWEAGLVRDPADLYDLTAEQVAPLERMGKKSAANLIAAIENSKSRGLAALIFALGIRLVGQTAAKTLARHFGSMDQLMKATTEELQAVSEIGPKMAESLQRWFAVPANRQMIDRLAEKGLQMETEKAGDAGVPQTFAGKTVVLTGTLTTLDRREAQRLLEERGAKVASSVSKKTSLVIAGEAAGSKLEKAKELNIPILSEADFLQLIDRV.

NAD(+) is bound by residues 41-45 (DAEYD), 90-91 (SL), and glutamate 120. Catalysis depends on lysine 122, which acts as the N6-AMP-lysine intermediate. NAD(+) is bound by residues arginine 143, glutamate 178, lysine 295, and lysine 319. Zn(2+) contacts are provided by cysteine 413, cysteine 416, cysteine 431, and cysteine 436. The BRCT domain occupies 596-675 (GVPQTFAGKT…ADFLQLIDRV (80 aa)).

This sequence belongs to the NAD-dependent DNA ligase family. LigA subfamily. Mg(2+) serves as cofactor. Mn(2+) is required as a cofactor.

It carries out the reaction NAD(+) + (deoxyribonucleotide)n-3'-hydroxyl + 5'-phospho-(deoxyribonucleotide)m = (deoxyribonucleotide)n+m + AMP + beta-nicotinamide D-nucleotide.. In terms of biological role, DNA ligase that catalyzes the formation of phosphodiester linkages between 5'-phosphoryl and 3'-hydroxyl groups in double-stranded DNA using NAD as a coenzyme and as the energy source for the reaction. It is essential for DNA replication and repair of damaged DNA. This Heliobacterium modesticaldum (strain ATCC 51547 / Ice1) protein is DNA ligase.